Reading from the N-terminus, the 145-residue chain is Hemoglobin fetal subunit beta (145 aa).

In terms of domain architecture, Globin spans 1–145 (MLTAEEKASV…VANALAHRYH (145 aa)). Heme b is bound by residues histidine 62 and histidine 91.

This sequence belongs to the globin family. As to quaternary structure, heterotetramer of two alpha chains and two beta chains.

This Ovis aries (Sheep) protein is Hemoglobin fetal subunit beta.